The following is a 204-amino-acid chain: MTERSPLRVGIGGPVGSGKTALTLNLCRALRDKYNMAVVTNDIYTKEDSNFLTRNEAMSPDRIVGVETGGCPHTAIREDASINLAAIDDLCEKFDGLELIIIESGGDNLAATFSPELSDLTLYVIDVAGGEKIPRKGGPGITKSDLLIINKTDLAPMVGANLDVMDQDAKRMRGEKPFLFSNMKTQDGLEEIIQFIEKQGLFKA.

13–20 (GPVGSGKT) is a GTP binding site.

Belongs to the SIMIBI class G3E GTPase family. UreG subfamily. In terms of assembly, homodimer. UreD, UreF and UreG form a complex that acts as a GTP-hydrolysis-dependent molecular chaperone, activating the urease apoprotein by helping to assemble the nickel containing metallocenter of UreC. The UreE protein probably delivers the nickel.

The protein localises to the cytoplasm. Facilitates the functional incorporation of the urease nickel metallocenter. This process requires GTP hydrolysis, probably effectuated by UreG. The protein is Urease accessory protein UreG of Acinetobacter baumannii (strain AB307-0294).